A 205-amino-acid chain; its full sequence is Basigin (205 aa).

The signal sequence occupies residues 1-18 (MAAALFVLLGFALLGTHG). Residues 19–103 (ASGAAGTVFT…MGTANIQLHG (85 aa)) enclose the Ig-like C2-type domain. At 19–205 (ASGAAGTVFT…AIITLRVRSH (187 aa)) the chain is on the extracellular side. 2 cysteine pairs are disulfide-bonded: Cys41–Cys87 and Cys126–Cys185. N-linked (GlcNAc...) asparagine glycosylation is found at Asn44, Asn152, and Asn186. An Ig-like V-type domain is found at 105–199 (PRVKAVKSSE…SKGSDQAIIT (95 aa)).

As to quaternary structure, homooligomer. Interacts with VEGFA, KDR/VEGFR2, PPIA/CYPA, SLC16A12, SLC16A11, ATP1B2, MAG, L1CAM and AJAP1. Interacts with SLC16A1; interaction mediates SLC16A1 targeting to the plasma membrane. Interacts with SLC16A3; interaction mediates SLC16A3 targeting to the plasma membrane. Interacts with PPIL2; regulates BSG transport to the cell membrane. Interacts with XKR8; promoting its localization at the cell membrane. Interacts with SLC16A6; this interaction mediates targeting to the plasma membrane.

It localises to the cell membrane. The protein resides in the endoplasmic reticulum membrane. Its subcellular location is the basolateral cell membrane. Signaling receptor for cyclophilins, essential for PPIA/CYPA and PPIB/CYPB-dependent signaling related to chemotaxis and adhesion of immune cells. Plays an important role in targeting the monocarboxylate transporters SLC16A1/GLUT1, SLC16A3, SLC16A8, SLC16A11 and SLC16A12 to the plasma membrane. Acts as a coreceptor for vascular endothelial growth factor receptor 2 (KDR/VEGFR2) in endothelial cells enhancing its VEGFA-mediated activation and downstream signaling. Promotes angiogenesis through EPAS1/HIF2A-mediated up-regulation of VEGFA and KDR/VEGFR2 in endothelial cells. The protein is Basigin (BSG) of Bos taurus (Bovine).